The sequence spans 182 residues: Inner membrane assembly complex subunit 17 (182 aa).

The N-terminal 45 residues, 1–45 (MLKRRSNALITLSRTKLFPITTVAYYHRRLLNQQRRAVSTSPKKE), are a transit peptide targeting the mitochondrion. Over 46 to 107 (IKSLEDLANL…EIPVKRFIRP (62 aa)) the chain is Mitochondrial matrix. A helical transmembrane segment spans residues 108 to 127 (LWMFILMGSSVYLLLHFSWW). A coiled-coil region spans residues 128-158 (KLEHEERESQLKKEVEILEHQLNELIIQDKT). Residues 128 to 182 (KLEHEERESQLKKEVEILEHQLNELIIQDKTHNTSRGKGSNESTHMKPWYRRWFW) lie on the Mitochondrial intermembrane side of the membrane.

The protein belongs to the INA17 family. In terms of assembly, component of the inner membrane assembly (INA) complex, composed of INA17 and INA22. Interacts with a subset of F(1)F(0)-ATP synthase subunits of the F(1)-domain and the peripheral stalk.

The protein resides in the mitochondrion inner membrane. In terms of biological role, component of the INA complex (INAC) that promotes the biogenesis of mitochondrial F(1)F(0)-ATP synthase. INAC facilitates the assembly of the peripheral stalk and promotes the assembly of the catalytic F(1)-domain with the membrane-embedded F(0)-domain. This is Inner membrane assembly complex subunit 17 from Saccharomyces cerevisiae (strain YJM789) (Baker's yeast).